Reading from the N-terminus, the 209-residue chain is Orotate phosphoribosyltransferase (209 aa).

Residues arginine 96, lysine 100, histidine 102, and glutamate 122–serine 130 contribute to the 5-phospho-alpha-D-ribose 1-diphosphate site. Serine 126 lines the orotate pocket.

Belongs to the purine/pyrimidine phosphoribosyltransferase family. PyrE subfamily. Homodimer. It depends on Mg(2+) as a cofactor.

The enzyme catalyses orotidine 5'-phosphate + diphosphate = orotate + 5-phospho-alpha-D-ribose 1-diphosphate. It participates in pyrimidine metabolism; UMP biosynthesis via de novo pathway; UMP from orotate: step 1/2. Functionally, catalyzes the transfer of a ribosyl phosphate group from 5-phosphoribose 1-diphosphate to orotate, leading to the formation of orotidine monophosphate (OMP). This chain is Orotate phosphoribosyltransferase, found in Cytophaga hutchinsonii (strain ATCC 33406 / DSM 1761 / CIP 103989 / NBRC 15051 / NCIMB 9469 / D465).